We begin with the raw amino-acid sequence, 137 residues long: Large ribosomal subunit protein uL16c (137 aa).

Basic residues predominate over residues 1-17 (MLSPKKTRFRRQHRGRM). The tract at residues 1 to 21 (MLSPKKTRFRRQHRGRMKGLS) is disordered.

It belongs to the universal ribosomal protein uL16 family. Part of the 50S ribosomal subunit.

It is found in the plastid. The polypeptide is Large ribosomal subunit protein uL16c (Cuscuta obtusiflora (Peruvian dodder)).